A 234-amino-acid polypeptide reads, in one-letter code: Large ribosomal subunit protein uL1 (234 aa).

The protein belongs to the universal ribosomal protein uL1 family. As to quaternary structure, part of the 50S ribosomal subunit.

Functionally, binds directly to 23S rRNA. The L1 stalk is quite mobile in the ribosome, and is involved in E site tRNA release. In terms of biological role, protein L1 is also a translational repressor protein, it controls the translation of the L11 operon by binding to its mRNA. This chain is Large ribosomal subunit protein uL1, found in Syntrophobacter fumaroxidans (strain DSM 10017 / MPOB).